Consider the following 115-residue polypeptide: Large ribosomal subunit protein bL20 (115 aa).

This sequence belongs to the bacterial ribosomal protein bL20 family.

In terms of biological role, binds directly to 23S ribosomal RNA and is necessary for the in vitro assembly process of the 50S ribosomal subunit. It is not involved in the protein synthesizing functions of that subunit. This chain is Large ribosomal subunit protein bL20, found in Prochlorococcus marinus (strain MIT 9312).